A 675-amino-acid chain; its full sequence is DNA ligase (675 aa).

NAD(+) contacts are provided by residues 34–38 (DAEYD), 83–84 (SL), and E116. K118 acts as the N6-AMP-lysine intermediate in catalysis. The NAD(+) site is built by R139, E176, K293, and K317. C411, C414, C429, and C435 together coordinate Zn(2+). The region spanning 594-675 (AGENPFKGKT…FLAIVNAYKR (82 aa)) is the BRCT domain.

Belongs to the NAD-dependent DNA ligase family. LigA subfamily. The cofactor is Mg(2+). Mn(2+) is required as a cofactor.

It carries out the reaction NAD(+) + (deoxyribonucleotide)n-3'-hydroxyl + 5'-phospho-(deoxyribonucleotide)m = (deoxyribonucleotide)n+m + AMP + beta-nicotinamide D-nucleotide.. Functionally, DNA ligase that catalyzes the formation of phosphodiester linkages between 5'-phosphoryl and 3'-hydroxyl groups in double-stranded DNA using NAD as a coenzyme and as the energy source for the reaction. It is essential for DNA replication and repair of damaged DNA. The sequence is that of DNA ligase from Mannheimia succiniciproducens (strain KCTC 0769BP / MBEL55E).